A 202-amino-acid chain; its full sequence is Holliday junction branch migration complex subunit RuvA (202 aa).

The domain I stretch occupies residues 1–64 (MIGRLRGTLA…EDAQLLYGFA (64 aa)). A domain II region spans residues 65–143 (GKRERDFFRE…AWETSPAMFA (79 aa)). Residues 144–154 (LVPNQPDGPAP) are flexible linker. The segment at 154–202 (PVNTAENDAVSALISLGYKPQEASKAISAIKEKGLSSEDMIRRALKGMI) is domain III.

The protein belongs to the RuvA family. Homotetramer. Forms an RuvA(8)-RuvB(12)-Holliday junction (HJ) complex. HJ DNA is sandwiched between 2 RuvA tetramers; dsDNA enters through RuvA and exits via RuvB. An RuvB hexamer assembles on each DNA strand where it exits the tetramer. Each RuvB hexamer is contacted by two RuvA subunits (via domain III) on 2 adjacent RuvB subunits; this complex drives branch migration. In the full resolvosome a probable DNA-RuvA(4)-RuvB(12)-RuvC(2) complex forms which resolves the HJ.

Its subcellular location is the cytoplasm. Functionally, the RuvA-RuvB-RuvC complex processes Holliday junction (HJ) DNA during genetic recombination and DNA repair, while the RuvA-RuvB complex plays an important role in the rescue of blocked DNA replication forks via replication fork reversal (RFR). RuvA specifically binds to HJ cruciform DNA, conferring on it an open structure. The RuvB hexamer acts as an ATP-dependent pump, pulling dsDNA into and through the RuvAB complex. HJ branch migration allows RuvC to scan DNA until it finds its consensus sequence, where it cleaves and resolves the cruciform DNA. The sequence is that of Holliday junction branch migration complex subunit RuvA from Pseudomonas fluorescens (strain Pf0-1).